Consider the following 206-residue polypeptide: uncharacterized protein (206 aa).

The N-terminal stretch at M1–A22 is a signal peptide. Residues E23 to P89 form the SH3b domain. A helical transmembrane segment spans residues I169–L191.

This sequence to H.influenzae HI_1605.

It is found in the membrane. This is an uncharacterized protein from Escherichia coli O157:H7.